A 202-amino-acid polypeptide reads, in one-letter code: Tetranectin (202 aa).

The first 21 residues, 1–21, serve as a signal peptide directing secretion; it reads MGFWGTYLLFCLFSFLSQLTA. 3 disulfide bridges follow: C71/C81, C98/C197, and C173/C189. Positions 77 to 198 constitute a C-type lectin domain; sequence VNLKCLLAFT…CRDQLPYICQ (122 aa).

In terms of assembly, homotrimer. As to expression, highest expression in lung, skeletal muscle and heart. Expressed in retina.

It localises to the secreted. Its function is as follows. Tetranectin binds to plasminogen and to isolated kringle 4. May be involved in the packaging of molecules destined for exocytosis. Plays a role in retinal function. The protein is Tetranectin (Clec3b) of Mus musculus (Mouse).